Consider the following 99-residue polypeptide: IEIKLGGDDGALAFVPGSFTVAAGEKIVFKNNAGFPHNIVFDEDEVPAGVDASKISMSEEDLLNAPGETYAVTLSEKGTYSFYCSPHQGAGMVGKVTVQ.

The 99-residue stretch at 1 to 99 folds into the Plastocyanin-like domain; it reads IEIKLGGDDG…AGMVGKVTVQ (99 aa). 4 residues coordinate Cu cation: His-37, Cys-84, His-87, and Met-92.

It belongs to the plastocyanin family. Cu(2+) is required as a cofactor.

Its subcellular location is the plastid. The protein resides in the chloroplast thylakoid membrane. Its function is as follows. Participates in electron transfer between P700 and the cytochrome b6-f complex in photosystem I. This chain is Plastocyanin (PETE), found in Rumex obtusifolius (Bitter dock).